The primary structure comprises 122 residues: Putative iron-sulfur cluster insertion protein ErpA (122 aa).

Iron-sulfur cluster is bound by residues C50, C114, and C116.

This sequence belongs to the HesB/IscA family. In terms of assembly, homodimer. It depends on iron-sulfur cluster as a cofactor.

Functionally, required for insertion of 4Fe-4S clusters. This is Putative iron-sulfur cluster insertion protein ErpA from Cupriavidus metallidurans (strain ATCC 43123 / DSM 2839 / NBRC 102507 / CH34) (Ralstonia metallidurans).